The sequence spans 2410 residues: Cell wall alpha-1,3-glucan synthase ags1 (2410 aa).

Ser-1643, Ser-1644, and Ser-1651 each carry phosphoserine. Phosphothreonine is present on Thr-1653. The interval 1685-1706 is disordered; the sequence is SLSLGSRRGPGHTTEDDASDGL. Phosphoserine is present on residues Ser-1738 and Ser-1812. The interval 1796–1827 is disordered; sequence QDDLSDPARSVDSDSVSPPLPPFVAGSNPNAR. Residues 1802-1827 are compositionally biased toward low complexity; it reads PARSVDSDSVSPPLPPFVAGSNPNAR.

It belongs to the glycosyltransferase group 1 family. Interacts with sad1.

The catalysed reaction is [(1-&gt;3)-alpha-D-glucosyl](n) + UDP-alpha-D-glucose = [(1-&gt;3)-alpha-D-glucosyl](n+1) + UDP + H(+). Required for alpha-1,3-glucan and alpha-1,4-glucan production which are required for cell wall synthesis. In Schizosaccharomyces pombe (strain 972 / ATCC 24843) (Fission yeast), this protein is Cell wall alpha-1,3-glucan synthase ags1 (ags1).